We begin with the raw amino-acid sequence, 434 residues long: Protein arginine N-methyltransferase 2 (434 aa).

Residues 155-198 (IQGEETTEEERKEEEPSNTSDIIDEQKVEQPKEDLKEDPSSNQE) are disordered. The span at 178 to 193 (DEQKVEQPKEDLKEDP) shows a compositional bias: basic and acidic residues. The RMT2 domain occupies 193–434 (PSSNQETYLK…YHPEARFMDV (242 aa)). Residues Tyr200, Met230, 258–263 (FGMGII), 279–281 (EAH), 306–307 (WQ), and Asp327 each bind S-adenosyl-L-methionine.

Belongs to the class I-like SAM-binding methyltransferase superfamily. RMT2 methyltransferase family. As to quaternary structure, monomer.

It localises to the cytoplasm. The protein localises to the nucleus. Functionally, S-adenosyl-L-methionine-dependent protein-arginine N-methyltransferase that methylates the delta-nitrogen atom of arginine residues to form N5-methylarginine (type IV) in target proteins. Monomethylates ribosomal protein L12. This Debaryomyces hansenii (strain ATCC 36239 / CBS 767 / BCRC 21394 / JCM 1990 / NBRC 0083 / IGC 2968) (Yeast) protein is Protein arginine N-methyltransferase 2.